Here is a 485-residue protein sequence, read N- to C-terminus: NADH-quinone oxidoreductase subunit N (485 aa).

14 helical membrane-spanning segments follow: residues Leu-8 to Ile-28, Phe-35 to Val-55, Gly-71 to Ala-91, Phe-105 to Leu-125, Ser-127 to Phe-147, Tyr-159 to Ala-179, Leu-203 to Phe-223, Pro-235 to Met-255, Val-271 to Gln-291, Leu-297 to Gln-317, Val-326 to Leu-346, Ala-373 to Ile-393, Trp-408 to Val-430, and Ile-455 to Ile-475.

It belongs to the complex I subunit 2 family. In terms of assembly, NDH-1 is composed of 13 different subunits. Subunits NuoA, H, J, K, L, M, N constitute the membrane sector of the complex.

Its subcellular location is the cell inner membrane. The catalysed reaction is a quinone + NADH + 5 H(+)(in) = a quinol + NAD(+) + 4 H(+)(out). Functionally, NDH-1 shuttles electrons from NADH, via FMN and iron-sulfur (Fe-S) centers, to quinones in the respiratory chain. The immediate electron acceptor for the enzyme in this species is believed to be ubiquinone. Couples the redox reaction to proton translocation (for every two electrons transferred, four hydrogen ions are translocated across the cytoplasmic membrane), and thus conserves the redox energy in a proton gradient. The chain is NADH-quinone oxidoreductase subunit N from Escherichia coli O6:K15:H31 (strain 536 / UPEC).